Reading from the N-terminus, the 284-residue chain is D-tagatose-1,6-bisphosphate aldolase subunit GatY (284 aa).

The active-site Proton donor is the aspartate 82. Residues histidine 83 and histidine 180 each contribute to the Zn(2+) site. Glycine 181 provides a ligand contact to dihydroxyacetone phosphate. Histidine 208 provides a ligand contact to Zn(2+). Residues 209–211 (GAS) and 230–233 (NVAT) each bind dihydroxyacetone phosphate.

It belongs to the class II fructose-bisphosphate aldolase family. TagBP aldolase GatY subfamily. As to quaternary structure, forms a complex with GatZ. Zn(2+) serves as cofactor.

The catalysed reaction is D-tagatofuranose 1,6-bisphosphate = D-glyceraldehyde 3-phosphate + dihydroxyacetone phosphate. Its pathway is carbohydrate metabolism; D-tagatose 6-phosphate degradation; D-glyceraldehyde 3-phosphate and glycerone phosphate from D-tagatose 6-phosphate: step 2/2. In terms of biological role, catalytic subunit of the tagatose-1,6-bisphosphate aldolase GatYZ, which catalyzes the reversible aldol condensation of dihydroxyacetone phosphate (DHAP or glycerone-phosphate) with glyceraldehyde 3-phosphate (G3P) to produce tagatose 1,6-bisphosphate (TBP). Requires GatZ subunit for full activity and stability. Is involved in the catabolism of galactitol. The protein is D-tagatose-1,6-bisphosphate aldolase subunit GatY of Shigella flexneri.